Here is a 732-residue protein sequence, read N- to C-terminus: Probable zinc transporter cis4 (732 aa).

12 consecutive transmembrane segments (helical) span residues 52-72 (ETLG…GLEV), 79-99 (FYLI…LGIY), 111-131 (VIIA…LGTL), 163-183 (YIAF…LGYF), 189-209 (VFYA…FYLV), 219-239 (LAFL…VLPL), 240-260 (GTIN…IFCI), 268-288 (IQFY…SAII), 350-370 (IFYF…YGLW), 380-400 (AIHM…TTLA), 415-435 (IEAL…FSIV), and 453-473 (LLLV…AFNH). The segment at 526-547 (HVSQHEHTHENSQEHHHEHNHN) is disordered. A run of 2 helical transmembrane segments spans residues 586–606 (IFLH…STIL) and 615–635 (FDPL…LPLI).

The protein belongs to the cation diffusion facilitator (CDF) transporter (TC 2.A.4) family. SLC30A subfamily. Interacts with zrg17.

It is found in the endoplasmic reticulum membrane. The protein resides in the golgi apparatus. It localises to the cis-Golgi network membrane. Probable zinc transporter involved in Golgi membrane trafficking through the regulation of zinc homeostasis. This is Probable zinc transporter cis4 (cis4) from Schizosaccharomyces pombe (strain 972 / ATCC 24843) (Fission yeast).